The chain runs to 227 residues: Ribose-5-phosphate isomerase A (227 aa).

Substrate-binding positions include 30–33, 86–89, and 99–102; these read TGST, DGAD, and KGMG. Glu-108 acts as the Proton acceptor in catalysis. Lys-126 is a binding site for substrate.

This sequence belongs to the ribose 5-phosphate isomerase family. Homodimer.

The catalysed reaction is aldehydo-D-ribose 5-phosphate = D-ribulose 5-phosphate. It participates in carbohydrate degradation; pentose phosphate pathway; D-ribose 5-phosphate from D-ribulose 5-phosphate (non-oxidative stage): step 1/1. Catalyzes the reversible conversion of ribose-5-phosphate to ribulose 5-phosphate. This chain is Ribose-5-phosphate isomerase A, found in Thermus thermophilus (strain ATCC 27634 / DSM 579 / HB8).